Here is an 86-residue protein sequence, read N- to C-terminus: Small ribosomal subunit protein uS15 (86 aa).

The tract at residues 1-22 is disordered; it reads MSVDTQKVIEDNKRSAQDTGSP. Residues 7 to 16 show a composition bias toward basic and acidic residues; it reads KVIEDNKRSA.

Belongs to the universal ribosomal protein uS15 family. As to quaternary structure, part of the 30S ribosomal subunit. Forms a bridge to the 50S subunit in the 70S ribosome, contacting the 23S rRNA.

In terms of biological role, one of the primary rRNA binding proteins, it binds directly to 16S rRNA where it helps nucleate assembly of the platform of the 30S subunit by binding and bridging several RNA helices of the 16S rRNA. Forms an intersubunit bridge (bridge B4) with the 23S rRNA of the 50S subunit in the ribosome. In Xanthomonas campestris pv. campestris (strain 8004), this protein is Small ribosomal subunit protein uS15.